A 198-amino-acid polypeptide reads, in one-letter code: Recombination protein RecR (198 aa).

A C4-type zinc finger spans residues 57-72 (CEKCNTFTEAQICEVC). One can recognise a Toprim domain in the interval 80–175 (TLLCVVETPA…AVTRLARGVP (96 aa)).

The protein belongs to the RecR family.

In terms of biological role, may play a role in DNA repair. It seems to be involved in an RecBC-independent recombinational process of DNA repair. It may act with RecF and RecO. This is Recombination protein RecR from Paraburkholderia phytofirmans (strain DSM 17436 / LMG 22146 / PsJN) (Burkholderia phytofirmans).